A 295-amino-acid chain; its full sequence is tRNA pseudouridine synthase B (295 aa).

Asp-42 acts as the Nucleophile in catalysis.

The protein belongs to the pseudouridine synthase TruB family. Type 1 subfamily.

The catalysed reaction is uridine(55) in tRNA = pseudouridine(55) in tRNA. Functionally, responsible for synthesis of pseudouridine from uracil-55 in the psi GC loop of transfer RNAs. In Cutibacterium acnes (strain DSM 16379 / KPA171202) (Propionibacterium acnes), this protein is tRNA pseudouridine synthase B.